The sequence spans 1400 residues: Alpha-(1-&gt;3)-arabinofuranosyltransferase (1400 aa).

Positions 1–30 (MAPLSRKWLPVVGAVALALTFAQSPGQVSP) are cleaved as a signal peptide. 8 consecutive transmembrane segments (helical) span residues 67–87 (YLFPHGTFFVIGHLLGVPGWV), 91–111 (LWWAVLLTVGFWGLLRVAEAL), 139–159 (ISSETLPMMLAPWVLLPTILA), 179–199 (VALMGAVNAIATLAGCLPAVI), 215–235 (AWWLLAMALATLWWVMALTQL), 282–302 (LVTGSAAILGTCLVAAAGLAG), 314–334 (LVTMLLVGVVLLAVGHRGGLA), and 401–421 (VAVAVVALTALMVSTSLAWTG). The F5/8 type C domain maps to 700 to 883 (AEPVVGGWTG…WDLGSELLGR (184 aa)). The next 4 membrane-spanning stretches (helical) occupy residues 1256–1276 (LYRASLAIGLALLPLLALLAF), 1297–1317 (WAAAGVLAAGAVIASIAGVMV), 1338–1358 (VTVGLAAGGLILAGAALSRHP), and 1369–1389 (WASVQLLALISVSVVAASVVA).

The protein localises to the membrane. It carries out the reaction Adds an alpha-D-arabinofuranosyl group from trans,octacis-decaprenylphospho-beta-D-arabinofuranose at the 3-O-position of an alpha-(1-&gt;5)-arabinofuranan chain attached to a beta-(1-&gt;5)-galactofuranan chain.. The protein operates within cell wall biogenesis; cell wall polysaccharide biosynthesis. Its function is as follows. Involved in the biosynthesis of the arabinogalactan (AG) region of the mycolylarabinogalactan-peptidoglycan (mAGP) complex, an essential component of the mycobacterial cell wall. Catalyzes the addition of an arabinofuranosyl (Araf) residue from the sugar donor decaprenyl-phospho-arabinose (DPA) on the C-3 of an alpha-(1-&gt;5)-linked Araf from the arabinan backbone of AG. The polypeptide is Alpha-(1-&gt;3)-arabinofuranosyltransferase (aftD) (Mycobacterium tuberculosis (strain ATCC 25618 / H37Rv)).